A 556-amino-acid chain; its full sequence is Membrane protein insertase YidC (556 aa).

5 helical membrane passes run 6-26 (IVLYMALALIGLSLWNAWQID), 332-352 (LDLTVDYGILWFLSSLLFSLM), 358-378 (VVGNWGWSIVLVTVLIKLAFY), 428-448 (LGGCLPILIQIPVFIALYWVL), and 501-521 (VMMFLPILFTGLFWNFPSGLV).

It belongs to the OXA1/ALB3/YidC family. Type 1 subfamily. Interacts with the Sec translocase complex via SecD. Specifically interacts with transmembrane segments of nascent integral membrane proteins during membrane integration.

It localises to the cell inner membrane. Required for the insertion and/or proper folding and/or complex formation of integral membrane proteins into the membrane. Involved in integration of membrane proteins that insert both dependently and independently of the Sec translocase complex, as well as at least some lipoproteins. Aids folding of multispanning membrane proteins. The sequence is that of Membrane protein insertase YidC from Legionella pneumophila (strain Corby).